A 2772-amino-acid chain; its full sequence is Protein DDB_G0276689 (2772 aa).

6 disordered regions span residues 50–82 (QQLKNQQKQTQSDNNNNNNNNNNNNNNNNNNNN), 371–415 (NLET…NGKS), 475–514 (LDINSKNNNNDNNNNNNNNSSSSGSNSSSSRNKNNLKNNL), 612–650 (NKNNNNNNNNNNNNNNNNNNNNNNNNNNNNNNNNNNNNE), 685–708 (LRGSFSPSSMSPSIPPSASNDSSL), and 933–982 (LVNN…NNSN). 4 stretches are compositionally biased toward low complexity: residues 376–412 (NNNNNNNNNNNNNNNNNNNNNNNNNNNNNNNNNNNNN), 478–514 (NSKNNNNDNNNNNNNNSSSSGSNSSSSRNKNNLKNNL), 614–649 (NNNNNNNNNNNNNNNNNNNNNNNNNNNNNNNNNNNN), and 688–708 (SFSPSSMSPSIPPSASNDSSL). One copy of the LRR 1 repeat lies at 1065–1089 (LSKWILNLDDNNYNHIPFMSLVLMP). The tract at residues 1282-1319 (NNNNIDNNNNNNNNNNNNNNNNNNNNNNNNNNNNNNNN) is disordered. 2 LRR repeats span residues 1393 to 1416 (LSNLLQVDLSDLIISSISHTTPKN) and 1543 to 1567 (HKDVEPFIQFSIENSKKLPSNSFSN). The span at 1587-1619 (QNNNYNNNNYNNNYNNNNNNNNNNNNNNNNNNN) shows a compositional bias: low complexity. Residues 1587–1622 (QNNNYNNNNYNNNYNNNNNNNNNNNNNNNNNNNIDN) form a disordered region. The stretch at 1899-1922 (LEELTKQEIGYQVLLVLPTDLQVE) is one LRR 4 repeat. Composition is skewed to polar residues over residues 1999 to 2011 (YVSNNNYNKNDQI) and 2073 to 2083 (LNIVHSTSPNS). Disordered regions lie at residues 1999 to 2021 (YVSNNNYNKNDQINSKEKDKDKK), 2054 to 2083 (EISNRSSTPPPPPPTETPSLNIVHSTSPNS), and 2367 to 2386 (NNSSNNSNNNNNTNNNNNNN). Residues 2414–2439 (TTIINNIEMDKNRLDEAIYYLKKYGN) form an LRR 5 repeat.

The chain is Protein DDB_G0276689 from Dictyostelium discoideum (Social amoeba).